The primary structure comprises 589 residues: L-fucose isomerase (589 aa).

Active-site proton acceptor residues include E340 and D364. Residues E340, D364, and H527 each coordinate Mn(2+).

It belongs to the L-fucose isomerase family. Mn(2+) serves as cofactor.

Its subcellular location is the cytoplasm. It carries out the reaction L-fucose = L-fuculose. It functions in the pathway carbohydrate degradation; L-fucose degradation; L-lactaldehyde and glycerone phosphate from L-fucose: step 1/3. Converts the aldose L-fucose into the corresponding ketose L-fuculose. This Haemophilus influenzae (strain ATCC 51907 / DSM 11121 / KW20 / Rd) protein is L-fucose isomerase.